Reading from the N-terminus, the 186-residue chain is Casparian strip membrane protein 5 (186 aa).

The Cytoplasmic portion of the chain corresponds to 1 to 25; sequence MKTDAIELGVAKDSTPIGGANRGVS. The chain crosses the membrane as a helical span at residues 26 to 46; the sequence is ILDFILRLVALVGTLASAILM. At 47–73 the chain is on the extracellular side; that stretch reads GTTNETLPFATQFIRFRAEYDDLPTFT. The N-linked (GlcNAc...) asparagine glycan is linked to Asn-50. Residues 74 to 94 traverse the membrane as a helical segment; the sequence is FFVVANIVVSGYLLLSLPLSI. The Cytoplasmic segment spans residues 95–106; that stretch reads VNIVRSTAKNRR. A helical membrane pass occupies residues 107 to 127; it reads IILIIFDTAMLALLTAGASAA. The Extracellular portion of the chain corresponds to 128–156; that stretch reads AAIVYLAHKGNTRANWFAICQQFNSFCER. A helical membrane pass occupies residues 157–177; that stretch reads ISGSLIGSFVGVAVFILLILM. Topologically, residues 178–186 are cytoplasmic; it reads SASALSRRN.

The protein belongs to the Casparian strip membrane proteins (CASP) family. In terms of assembly, homodimer and heterodimers.

It is found in the cell membrane. Regulates membrane-cell wall junctions and localized cell wall deposition. Required for establishment of the Casparian strip membrane domain (CSD) and the subsequent formation of Casparian strips, a cell wall modification of the root endodermis that determines an apoplastic barrier between the intraorganismal apoplasm and the extraorganismal apoplasm and prevents lateral diffusion. The sequence is that of Casparian strip membrane protein 5 from Ricinus communis (Castor bean).